The chain runs to 154 residues: Snaclec salmorin subunit A (154 aa).

A signal peptide spans 1–23; sequence MGRFIFVSFGLLVVFLSLSGTGA. 3 cysteine pairs are disulfide-bonded: Cys-27–Cys-38, Cys-55–Cys-152, and Cys-127–Cys-144. The C-type lectin domain occupies 34–153; it reads NNGHCYQAFN…CGQRNPFVCE (120 aa). 3 residues coordinate Ca(2+): Ser-66, Glu-68, and Glu-72. Residue Glu-153 coordinates Ca(2+).

The protein belongs to the snaclec family. As to quaternary structure, heterodimer of subunits A and B; disulfide-linked. Expressed by the venom gland.

The protein resides in the secreted. Inhibits thrombin-induced fibrinogen clotting and factor Xa-induced prothrombin activation. Binds to thrombin and prothrombin exosites. This is Snaclec salmorin subunit A from Gloydius brevicauda (Korean slamosa snake).